A 317-amino-acid polypeptide reads, in one-letter code: L-lactate dehydrogenase (317 aa).

Residues Val-16, Asp-37, Lys-42, Tyr-68, and Gly-82–Ala-83 contribute to the NAD(+) site. The substrate site is built by Gln-85 and Arg-91. Residues Thr-104, Ala-121–Asn-123, and Ser-146 contribute to the NAD(+) site. Asn-123–Asp-126 serves as a coordination point for substrate. Asp-151–Arg-154 serves as a coordination point for substrate. Arg-156 and His-171 together coordinate beta-D-fructose 1,6-bisphosphate. His-178 acts as the Proton acceptor in catalysis. Tyr-222 carries the phosphotyrosine modification. Thr-231 contacts substrate.

The protein belongs to the LDH/MDH superfamily. LDH family. In terms of assembly, homotetramer.

Its subcellular location is the cytoplasm. It carries out the reaction (S)-lactate + NAD(+) = pyruvate + NADH + H(+). Its pathway is fermentation; pyruvate fermentation to lactate; (S)-lactate from pyruvate: step 1/1. Allosterically activated by fructose 1,6-bisphosphate (FBP). Its function is as follows. Catalyzes the conversion of lactate to pyruvate. This chain is L-lactate dehydrogenase, found in Corynebacterium efficiens (strain DSM 44549 / YS-314 / AJ 12310 / JCM 11189 / NBRC 100395).